The sequence spans 117 residues: Large ribosomal subunit protein bL20 (117 aa).

This sequence belongs to the bacterial ribosomal protein bL20 family.

Binds directly to 23S ribosomal RNA and is necessary for the in vitro assembly process of the 50S ribosomal subunit. It is not involved in the protein synthesizing functions of that subunit. The chain is Large ribosomal subunit protein bL20 from Streptococcus suis (strain 05ZYH33).